The following is a 210-amino-acid chain: uncharacterized protein (210 aa).

Phosphoserine occurs at positions 18, 39, 41, 57, and 60. Over residues 33-46 (LDLDQRSMSPSNIA) the composition is skewed to polar residues. Residues 33-58 (LDLDQRSMSPSNIASGEDRITRTNSG) are disordered. 2 disordered regions span residues 100 to 139 (YDHNNGTKSPTPKTSNMVDPKNKKKNKKKKNDKDDKYKVS) and 177 to 210 (DSAPLDNANYPLSDHSPSLNSMDNTTKHSSNVHT). The segment covering 102-116 (HNNGTKSPTPKTSNM) has biased composition (polar residues). Over residues 130 to 139 (NDKDDKYKVS) the composition is skewed to basic and acidic residues. Phosphoserine is present on residues Ser-178, Ser-189, and Ser-192. The segment covering 191–210 (HSPSLNSMDNTTKHSSNVHT) has biased composition (polar residues).

This is an uncharacterized protein from Saccharomyces cerevisiae (strain ATCC 204508 / S288c) (Baker's yeast).